The sequence spans 536 residues: Transcriptional regulator RPN4 (536 aa).

2 stretches are compositionally biased toward low complexity: residues 154-181 (QEQQSQLPQPQQPISQQDKQRPQSQQQQ) and 361-370 (SPSAISPASP). Disordered stretches follow at residues 154-196 (QEQQ…TRRR), 353-375 (VFDQPKEVSPSAISPASPDSDDM), and 393-434 (EEIN…AEIT). The span at 393 to 411 (EEINKKHSKSGKKESKSQK) shows a compositional bias: basic and acidic residues. The segment at 440–471 (HQCNLINPSTGEPCNKQFSRPYDLIRHQDTIH) adopts a C2H2-type zinc-finger fold.

The protein localises to the nucleus. Functionally, transcriptional activator of a number of genes encoding proteasomal subunits. Binds to the DNA sequence 5'-GAAGGCAAAA-3', enriched in regions upstream of proteasome genes. The protein is Transcriptional regulator RPN4 (RPN4) of Candida albicans (strain SC5314 / ATCC MYA-2876) (Yeast).